A 213-amino-acid polypeptide reads, in one-letter code: Large ribosomal subunit protein uL3 (213 aa).

Residue glutamine 151 is modified to N5-methylglutamine.

This sequence belongs to the universal ribosomal protein uL3 family. Part of the 50S ribosomal subunit. Forms a cluster with proteins L14 and L19. Post-translationally, methylated by PrmB.

Functionally, one of the primary rRNA binding proteins, it binds directly near the 3'-end of the 23S rRNA, where it nucleates assembly of the 50S subunit. This chain is Large ribosomal subunit protein uL3, found in Rhizobium johnstonii (strain DSM 114642 / LMG 32736 / 3841) (Rhizobium leguminosarum bv. viciae).